The primary structure comprises 94 residues: Co-chaperonin GroES (94 aa).

Belongs to the GroES chaperonin family. As to quaternary structure, heptamer of 7 subunits arranged in a ring. Interacts with the chaperonin GroEL.

The protein resides in the cytoplasm. Together with the chaperonin GroEL, plays an essential role in assisting protein folding. The GroEL-GroES system forms a nano-cage that allows encapsulation of the non-native substrate proteins and provides a physical environment optimized to promote and accelerate protein folding. GroES binds to the apical surface of the GroEL ring, thereby capping the opening of the GroEL channel. The sequence is that of Co-chaperonin GroES from Leuconostoc citreum (strain KM20).